A 55-amino-acid polypeptide reads, in one-letter code: Large ribosomal subunit protein bL33 (55 aa).

The protein belongs to the bacterial ribosomal protein bL33 family.

The polypeptide is Large ribosomal subunit protein bL33 (Paramagnetospirillum magneticum (strain ATCC 700264 / AMB-1) (Magnetospirillum magneticum)).